Reading from the N-terminus, the 298-residue chain is Methylsterol monooxygenase 1-1 (298 aa).

The next 3 membrane-spanning stretches (helical) occupy residues 42-62 (ILFL…VELA), 96-116 (FILV…MIEI), and 118-138 (SGLP…YFLI). Residues 132-267 (LVVYFLIEDY…FTYCDYIYGT (136 aa)) enclose the Fatty acid hydroxylase domain. Positions 147–151 (HRFFH) match the Histidine box-1 motif. The Histidine box-2 signature appears at 160–164 (HRVHH). Residues 189–209 (TFMGPAIAPGHMITFWLWIAL) traverse the membrane as a helical segment. Positions 239-245 (YHDYHHY) match the Histidine box-3 motif.

This sequence belongs to the sterol desaturase family. As to quaternary structure, interacts with ACBP1. Fe cation is required as a cofactor. In terms of tissue distribution, expressed in rosettes, stems, roots, floral buds, flowers and siliques.

The protein resides in the endoplasmic reticulum membrane. The enzyme catalyses 4,4-dimethyl-5alpha-cholest-7-en-3beta-ol + 6 Fe(II)-[cytochrome b5] + 3 O2 + 5 H(+) = 4alpha-carboxy-4beta-methyl-5alpha-cholest-7-ene-3beta-ol + 6 Fe(III)-[cytochrome b5] + 4 H2O. It carries out the reaction 24-methylenecycloartanol + 6 Fe(II)-[cytochrome b5] + 3 O2 + 5 H(+) = 4alpha-carboxy-4beta,14alpha-dimethyl-9beta,19-cyclo-5alpha-ergost-24(24(1))-en-3beta-ol + 6 Fe(III)-[cytochrome b5] + 4 H2O. Non-heme iron oxygenase involved in sterols biosynthesis by catalyzing the removal of the first methyl group at the C-4 position. 4,4-dimethyl-9-beta,19-cyclopropylsterols such as 24-methylenecycloartanol are the preferred substrates. Acts as a rate-limiting enzyme in the sterol pathway via interaction with ACBP1; sterols serve as lipid modulators for gene expression of homeodomain-leucine zipper IV transcription factors. Together with SMO1-2, involved in the maintenance of sterol composition to balance auxin and cytokinin activities during embryogenesis. The chain is Methylsterol monooxygenase 1-1 from Arabidopsis thaliana (Mouse-ear cress).